The primary structure comprises 504 residues: Lysine--tRNA ligase (504 aa).

Positions 23-31 (PSGPIHIGN) match the 'HIGH' region motif.

This sequence belongs to the class-I aminoacyl-tRNA synthetase family.

It is found in the cytoplasm. It catalyses the reaction tRNA(Lys) + L-lysine + ATP = L-lysyl-tRNA(Lys) + AMP + diphosphate. This is Lysine--tRNA ligase from Picrophilus torridus (strain ATCC 700027 / DSM 9790 / JCM 10055 / NBRC 100828 / KAW 2/3).